The sequence spans 344 residues: tRNA dimethylallyltransferase (344 aa).

Position 43 to 50 (Gly-43 to Ser-50) interacts with ATP. Position 45 to 50 (Thr-45 to Ser-50) interacts with substrate. Positions Asp-68–Gln-71 are interaction with substrate tRNA.

Belongs to the IPP transferase family. Monomer. Mg(2+) is required as a cofactor.

It catalyses the reaction adenosine(37) in tRNA + dimethylallyl diphosphate = N(6)-dimethylallyladenosine(37) in tRNA + diphosphate. Functionally, catalyzes the transfer of a dimethylallyl group onto the adenine at position 37 in tRNAs that read codons beginning with uridine, leading to the formation of N6-(dimethylallyl)adenosine (i(6)A). This chain is tRNA dimethylallyltransferase, found in Protochlamydia amoebophila (strain UWE25).